A 347-amino-acid chain; its full sequence is Fructose-1,6-bisphosphatase class 1 (347 aa).

Positions 107, 128, 130, and 131 each coordinate Mg(2+). Substrate contacts are provided by residues 131–134 (DGSS), asparagine 224, tyrosine 257, and lysine 286. A Mg(2+)-binding site is contributed by glutamate 292.

The protein belongs to the FBPase class 1 family. As to quaternary structure, homotetramer. It depends on Mg(2+) as a cofactor.

The protein localises to the cytoplasm. The enzyme catalyses beta-D-fructose 1,6-bisphosphate + H2O = beta-D-fructose 6-phosphate + phosphate. It functions in the pathway carbohydrate biosynthesis; gluconeogenesis. The polypeptide is Fructose-1,6-bisphosphatase class 1 (Sorangium cellulosum (strain So ce56) (Polyangium cellulosum (strain So ce56))).